The chain runs to 440 residues: Glycerophosphocholine cholinephosphodiesterase ENPP6 (440 aa).

Positions 1-22 (MAGKLWTFLLLFGFSWVWPASA) are cleaved as a signal peptide. Positions 32, 71, and 92 each coordinate substrate. Zn(2+) contacts are provided by D32 and S71. The Nucleophile role is filled by S71. Phosphoserine is present on S71. N-linked (GlcNAc...) asparagine glycosylation is found at N100 and N118. Residues C142 and C154 are joined by a disulfide bond. Residue D193 participates in substrate binding. Residues D193, H197, D240, and H241 each contribute to the Zn(2+) site. H241 is a substrate binding site. N341 is a glycosylation site (N-linked (GlcNAc...) asparagine). Residue H354 coordinates substrate. H354 contacts Zn(2+). N-linked (GlcNAc...) asparagine glycosylation is present at N404. S419 carries GPI-anchor amidated serine lipidation. A propeptide spans 420–440 (SSPSIPPNSCALVLILLLYFV) (removed in mature form).

It belongs to the nucleotide pyrophosphatase/phosphodiesterase family. In terms of assembly, homodimer; disulfide-linked. Homotetramer. Zn(2+) is required as a cofactor.

Its subcellular location is the cell membrane. It carries out the reaction sn-glycerol 3-phosphocholine + H2O = phosphocholine + glycerol + H(+). The catalysed reaction is a 1-acyl-sn-glycero-3-phosphocholine + H2O = a 1-acyl-sn-glycerol + phosphocholine + H(+). The enzyme catalyses a 1-O-alkyl-sn-glycero-3-phosphocholine + H2O = a 1-O-alkyl-sn-glycerol + phosphocholine + H(+). It catalyses the reaction 1-dodecanoyl-sn-glycero-3-phosphocholine + H2O = 1-dodecanoyl-sn-glycerol + phosphocholine + H(+). It carries out the reaction 1-hexadecanoyl-sn-glycero-3-phosphocholine + H2O = 1-hexadecanoyl-sn-glycerol + phosphocholine + H(+). The catalysed reaction is 1-(5Z,8Z,11Z,14Z-eicosatetraenoyl)-sn-glycero-3-phosphocholine + H2O = 1-(5Z,8Z,11Z,14Z-eicosatetraenoyl)-sn-glycerol + phosphocholine + H(+). The enzyme catalyses 1-tetradecanoyl-sn-glycero-3-phosphocholine + H2O = 1-tetradecanoyl-sn-glycerol + phosphocholine + H(+). It catalyses the reaction sphing-4-enine-phosphocholine + H2O = sphing-4-enine + phosphocholine + H(+). It carries out the reaction 1-(9Z-octadecenoyl)-sn-glycero-3-phosphocholine + H2O = 1-(9Z-octadecenoyl)-sn-glycerol + phosphocholine + H(+). The catalysed reaction is 1-(9Z,12Z)-octadecadienoyl-sn-glycero-3-phosphocholine + H2O = 1-(9Z,12Z-octadecadienoyl)-sn-glycerol + phosphocholine + H(+). The enzyme catalyses glycero-2-phosphocholine + H2O = phosphocholine + glycerol + H(+). Its activity is regulated as follows. Inhibited by EDTA and EGTA in vitro. Choline-specific glycerophosphodiesterase that hydrolyzes glycerophosphocholine (GPC) and lysophosphatidylcholine (LPC) and contributes to supplying choline to the cells. Has a preference for LPC with short (12:0 and 14:0) or polyunsaturated (18:2 and 20:4) fatty acids. In vitro, hydrolyzes only choline-containing lysophospholipids, such as sphingosylphosphorylcholine (SPC), platelet-activating factor (PAF) and lysoPAF, but not other lysophospholipids. The polypeptide is Glycerophosphocholine cholinephosphodiesterase ENPP6 (Rattus norvegicus (Rat)).